Consider the following 86-residue polypeptide: Small ribosomal subunit protein bS16 (86 aa).

This sequence belongs to the bacterial ribosomal protein bS16 family.

The chain is Small ribosomal subunit protein bS16 from Xanthomonas campestris pv. campestris (strain 8004).